The chain runs to 354 residues: Phenylalanine 4-monooxygenase, chloroplastic (354 aa).

A chloroplast-targeting transit peptide spans 1-60 (MAFPLQKTFLCSNGQSFPCSNGRSTSTLLASDLKFQRLNKPFILRVGSMQIRNSPKEHPR). H229, H234, and E274 together coordinate Fe cation.

The protein belongs to the biopterin-dependent aromatic amino acid hydroxylase family. In terms of assembly, forms monomers. Fe(2+) is required as a cofactor.

The protein resides in the plastid. It localises to the chloroplast. The catalysed reaction is (6R)-L-erythro-5,6,7,8-tetrahydrobiopterin + L-phenylalanine + O2 = (4aS,6R)-4a-hydroxy-L-erythro-5,6,7,8-tetrahydrobiopterin + L-tyrosine. In terms of biological role, catalyzes the hydroxylation of L-phenylalanine to L-tyrosine. Does not seem to be tetrahydropterin-dependent and shows preference for 10-formyltetrahydrofolate as cosubstrate and electron donor. This is Phenylalanine 4-monooxygenase, chloroplastic from Pinus taeda (Loblolly pine).